Consider the following 325-residue polypeptide: tRNA(Ile)-lysidine synthase (325 aa).

34–39 is a binding site for ATP; sequence SGGADS.

It belongs to the tRNA(Ile)-lysidine synthase family.

Its subcellular location is the cytoplasm. The catalysed reaction is cytidine(34) in tRNA(Ile2) + L-lysine + ATP = lysidine(34) in tRNA(Ile2) + AMP + diphosphate + H(+). Ligates lysine onto the cytidine present at position 34 of the AUA codon-specific tRNA(Ile) that contains the anticodon CAU, in an ATP-dependent manner. Cytidine is converted to lysidine, thus changing the amino acid specificity of the tRNA from methionine to isoleucine. The protein is tRNA(Ile)-lysidine synthase of Rhodococcus opacus (strain B4).